The primary structure comprises 353 residues: Dimethylsulfoniopropionate lyase 2 (353 aa).

Residues Cys125 and Cys274 each act as proton donor/acceptor in the active site. The interval 326 to 353 (DPNETDVSKGRPTKAEHRFGPEFEEMLQ) is disordered. Basic and acidic residues predominate over residues 331–346 (DVSKGRPTKAEHRFGP).

This sequence belongs to the aspartate/glutamate racemases family. ALMA1 subfamily. Homotetramer.

It catalyses the reaction S,S-dimethyl-beta-propiothetin = acrylate + dimethyl sulfide + H(+). In terms of biological role, mediates cleavage of dimethylsulfoniopropionate (DMSP) into dimethyl sulfide (DMS) and acrylate. DMS is the principal form by which sulfur is transported from oceans to the atmosphere and is a key component of the ocean sulfur cycle. The chain is Dimethylsulfoniopropionate lyase 2 from Emiliania huxleyi (strain CCMP1516).